Consider the following 110-residue polypeptide: Large ribosomal subunit protein uL22 (110 aa).

It belongs to the universal ribosomal protein uL22 family. Part of the 50S ribosomal subunit.

Functionally, this protein binds specifically to 23S rRNA; its binding is stimulated by other ribosomal proteins, e.g. L4, L17, and L20. It is important during the early stages of 50S assembly. It makes multiple contacts with different domains of the 23S rRNA in the assembled 50S subunit and ribosome. Its function is as follows. The globular domain of the protein is located near the polypeptide exit tunnel on the outside of the subunit, while an extended beta-hairpin is found that lines the wall of the exit tunnel in the center of the 70S ribosome. This is Large ribosomal subunit protein uL22 from Shewanella halifaxensis (strain HAW-EB4).